We begin with the raw amino-acid sequence, 119 residues long: Large ribosomal subunit protein uL18 (119 aa).

The protein belongs to the universal ribosomal protein uL18 family. In terms of assembly, part of the 50S ribosomal subunit; part of the 5S rRNA/L5/L18/L25 subcomplex. Contacts the 5S and 23S rRNAs.

Functionally, this is one of the proteins that bind and probably mediate the attachment of the 5S RNA into the large ribosomal subunit, where it forms part of the central protuberance. The sequence is that of Large ribosomal subunit protein uL18 from Cupriavidus taiwanensis (strain DSM 17343 / BCRC 17206 / CCUG 44338 / CIP 107171 / LMG 19424 / R1) (Ralstonia taiwanensis (strain LMG 19424)).